A 70-amino-acid polypeptide reads, in one-letter code: Small ribosomal subunit protein bS21B (70 aa).

The disordered stretch occupies residues 37–70; sequence SYEKPTTERKRKKAAAVARLRKQVRRSMPPKKKY. A compositionally biased stretch (basic residues) spans 45 to 70; sequence RKRKKAAAVARLRKQVRRSMPPKKKY.

This sequence belongs to the bacterial ribosomal protein bS21 family.

In Burkholderia pseudomallei (strain K96243), this protein is Small ribosomal subunit protein bS21B.